The following is a 335-amino-acid chain: Glycerol-3-phosphate dehydrogenase [NAD(P)+] (335 aa).

Lysine 109 provides a ligand contact to NADPH. Positions 109, 141, and 143 each coordinate sn-glycerol 3-phosphate. NADPH is bound at residue alanine 145. Positions 196, 249, 259, 260, and 261 each coordinate sn-glycerol 3-phosphate. Lysine 196 functions as the Proton acceptor in the catalytic mechanism. Arginine 260 is an NADPH binding site. Residue glutamate 283 participates in NADPH binding.

This sequence belongs to the NAD-dependent glycerol-3-phosphate dehydrogenase family.

The protein resides in the cytoplasm. The enzyme catalyses sn-glycerol 3-phosphate + NAD(+) = dihydroxyacetone phosphate + NADH + H(+). It carries out the reaction sn-glycerol 3-phosphate + NADP(+) = dihydroxyacetone phosphate + NADPH + H(+). It participates in membrane lipid metabolism; glycerophospholipid metabolism. Its function is as follows. Catalyzes the reduction of the glycolytic intermediate dihydroxyacetone phosphate (DHAP) to sn-glycerol 3-phosphate (G3P), the key precursor for phospholipid synthesis. This chain is Glycerol-3-phosphate dehydrogenase [NAD(P)+], found in Mycoplasma mobile (strain ATCC 43663 / 163K / NCTC 11711) (Mesomycoplasma mobile).